We begin with the raw amino-acid sequence, 206 residues long: Urease accessory protein UreG (206 aa).

11–18 contacts GTP; the sequence is GPVGAGKT.

It belongs to the SIMIBI class G3E GTPase family. UreG subfamily. In terms of assembly, homodimer. UreD, UreF and UreG form a complex that acts as a GTP-hydrolysis-dependent molecular chaperone, activating the urease apoprotein by helping to assemble the nickel containing metallocenter of UreC. The UreE protein probably delivers the nickel.

It is found in the cytoplasm. Its function is as follows. Facilitates the functional incorporation of the urease nickel metallocenter. This process requires GTP hydrolysis, probably effectuated by UreG. This is Urease accessory protein UreG from Ureaplasma parvum serovar 3 (strain ATCC 700970).